We begin with the raw amino-acid sequence, 648 residues long: UDP-galactose:fucoside alpha-3-galactosyltransferase (648 aa).

7 WD repeats span residues 320-358 (NHTD…GNDT), 372-420 (HKRG…IQTF), 422-461 (GHTG…FKRV), 464-505 (GHNG…NIIK), 507-546 (NQGG…NFND), 556-595 (NENS…NNNN), and 617-648 (HLNS…SWDL).

It belongs to the glycosyltransferase 77 family. The cofactor is Mn(2+).

Its subcellular location is the cytoplasm. The catalysed reaction is an alpha-L-fucosyl-(1-&gt;2)-beta-D-galactosyl derivative + UDP-alpha-D-galactose = an alpha-D-galactosyl-(1-&gt;3)-[alpha-L-fucosyl-(1-&gt;2)]-beta-D-galactosyl derivative + UDP + H(+). The protein operates within protein modification; protein glycosylation. Its activity is regulated as follows. Stimulated by dithiothreitol (DTT) in vitro. Totally inhibited by EDTA. Functionally, specifically catalyzes the transfer of a galactosyl residue to the hydroxyproline-linked saccharide on Skp1 protein (fpaA/fpaB). Catalyzes the formation of a Gal-alpha-1,3-Fuc linkage, leading to Gal-Fuc-Gal-GlcNAc-HyPro143-Skp1. The polypeptide is UDP-galactose:fucoside alpha-3-galactosyltransferase (agtA) (Dictyostelium discoideum (Social amoeba)).